We begin with the raw amino-acid sequence, 263 residues long: S-acyl fatty acid synthase thioesterase, medium chain (263 aa).

M1 carries the N-acetylmethionine modification. Active-site residues include S101 and H237. An important for interaction with FASN region spans residues 262–263; that stretch reads LT.

It belongs to the thioesterase family. Interacts (via C-terminus) with FASN.

It is found in the cytoplasm. The protein resides in the cytosol. The enzyme catalyses (9Z)-octadecenoyl-[ACP] + H2O = (9Z)-octadecenoate + holo-[ACP] + H(+). The catalysed reaction is decanoyl-CoA + H2O = decanoate + CoA + H(+). It catalyses the reaction dodecanoyl-CoA + H2O = dodecanoate + CoA + H(+). It carries out the reaction tetradecanoyl-CoA + H2O = tetradecanoate + CoA + H(+). The enzyme catalyses hexadecanoyl-CoA + H2O = hexadecanoate + CoA + H(+). Contributes to the release of free fatty acids from fatty acid synthase (FASN). Has broad substrate specificity, giving rise to a range of free fatty acids with chain lengths between 10 and 16 carbon atoms (C10 - C16). The chain is S-acyl fatty acid synthase thioesterase, medium chain from Rattus norvegicus (Rat).